The sequence spans 171 residues: tRNA-splicing endonuclease subunit Sen15 (171 aa).

A disordered region spans residues 1 to 35 (MEERGDSEPTPGCSGLGPGGVRGFGDGGGAPSWAP). At Ser7 the chain carries Phosphoserine. Residues 14–30 (SGLGPGGVRGFGDGGGA) show a composition bias toward gly residues. A Phosphoserine modification is found at Ser168.

This sequence belongs to the SEN15 family. As to quaternary structure, homodimer. tRNA splicing endonuclease is a heterotetramer composed of TSEN2, TSEN15, TSEN34/LENG5 and TSEN54. tRNA splicing endonuclease complex also contains proteins of the Pre-mRNA 3' end processing machinery, such as CLP1, CPSF1, CPSF4 and CSTF2. Widely expressed. Highly expressed in testis and uterus.

It localises to the nucleus. Its subcellular location is the nucleolus. Its function is as follows. Non-catalytic subunit of the tRNA-splicing endonuclease complex, a complex responsible for identification and cleavage of the splice sites in pre-tRNA. It cleaves pre-tRNA at the 5' and 3' splice sites to release the intron. The products are an intron and two tRNA half-molecules bearing 2',3' cyclic phosphate and 5'-OH termini. There are no conserved sequences at the splice sites, but the intron is invariably located at the same site in the gene, placing the splice sites an invariant distance from the constant structural features of the tRNA body. The tRNA splicing endonuclease is also involved in mRNA processing via its association with pre-mRNA 3'-end processing factors, establishing a link between pre-tRNA splicing and pre-mRNA 3'-end formation, suggesting that the endonuclease subunits function in multiple RNA-processing events. The protein is tRNA-splicing endonuclease subunit Sen15 (TSEN15) of Homo sapiens (Human).